Here is a 292-residue protein sequence, read N- to C-terminus: Small ribosomal subunit protein uS3 (292 aa).

One can recognise a KH type-2 domain in the interval 39–110 (IRLEIMKFLK…KISIKIKEVK (72 aa)). The tract at residues 247–268 (KANERQSRAALNKKDGLSKDET) is disordered.

It belongs to the universal ribosomal protein uS3 family. Part of the 30S ribosomal subunit. Forms a tight complex with proteins S10 and S14.

Functionally, binds the lower part of the 30S subunit head. Binds mRNA in the 70S ribosome, positioning it for translation. The chain is Small ribosomal subunit protein uS3 from Borrelia garinii subsp. bavariensis (strain ATCC BAA-2496 / DSM 23469 / PBi) (Borreliella bavariensis).